A 427-amino-acid polypeptide reads, in one-letter code: Beta-porphyranase D (427 aa).

The N-terminal stretch at 1–19 (MILKQAILTLVLVNANLFA) is a signal peptide. The tract at residues 23–45 (PKTYSSTDKETRQGPPKPPMGKR) is disordered. In terms of domain architecture, GH16 spans 32-308 (ETRQGPPKPP…WVRAYRLVDV (277 aa)). Substrate-binding residues include W73, R76, E168, E173, and E272. The active-site Nucleophile is the E168. Catalysis depends on E173, which acts as the Proton donor.

The protein belongs to the glycosyl hydrolase 16 family.

Its subcellular location is the periplasm. The catalysed reaction is Hydrolysis of beta-D-galactopyranose-(1-&gt;4)-alpha-L-galactopyranose-6-sulfate linkages in porphyran.. In terms of biological role, cleaves the sulfated polysaccharide porphyran at the (1-&gt;4) linkages between beta-D-galactopyranose and alpha-L-galactopyranose-6-sulfate, forming mostly the disaccharide alpha-L-galactopyranose-6-sulfate-(1-&gt;3)-beta-D-galactose. The polypeptide is Beta-porphyranase D (porD) (Zobellia galactanivorans (strain DSM 12802 / CCUG 47099 / CIP 106680 / NCIMB 13871 / Dsij)).